The sequence spans 740 residues: Alpha-1,6-mannosylglycoprotein 6-beta-N-acetylglucosaminyltransferase A (740 aa).

At 1 to 13 the chain is on the cytoplasmic side; sequence MAFFSPWKLSSQK. A helical; Signal-anchor for type II membrane protein membrane pass occupies residues 14–30; sequence LGFFLVTFGFIWGMMLL. Topologically, residues 31-740 are lumenal; it reads HFTIQQRTQP…GQVALCKDCL (710 aa). Residues Asn109, Asn114, and Asn117 are each glycosylated (N-linked (GlcNAc...) asparagine). Intrachain disulfides connect Cys144–Cys182, Cys155–Cys195, Cys171–Cys337, Cys371–Cys625, Cys648–Cys723, Cys652–Cys725, Cys659–Cys712, Cys680–Cys701, and Cys736–Cys739. Positions 212–740 are sufficient for catalytic activity; that stretch reads NSLAEIRTDF…GQVALCKDCL (529 aa). An N-linked (GlcNAc...) asparagine glycan is attached at Asn333. 377–378 lines the substrate pocket; the sequence is DS. N-linked (GlcNAc...) asparagine glycans are attached at residues Asn432 and Asn446. A UDP-N-acetyl-alpha-D-glucosamine-binding site is contributed by Glu525. Lys553 provides a ligand contact to substrate.

This sequence belongs to the glycosyltransferase 18 family. Post-translationally, N-glycosylated. A secreted form is released from the membrane after cleavage by gamma-secretase. In terms of tissue distribution, detected in cerebellum.

It is found in the golgi apparatus membrane. Its subcellular location is the perikaryon. The protein resides in the secreted. It catalyses the reaction N(4)-{beta-D-GlcNAc-(1-&gt;2)-[beta-D-GlcNAc-(1-&gt;4)]-alpha-D-Man-(1-&gt;3)-[beta-D-GlcNAc-(1-&gt;2)-alpha-D-Man-(1-&gt;6)]-beta-D-Man-(1-&gt;4)-beta-D-GlcNAc-(1-&gt;4)-beta-D-GlcNAc}-L-asparaginyl-[protein] + UDP-N-acetyl-alpha-D-glucosamine = N(4)-{beta-D-GlcNAc-(1-&gt;2)-[beta-D-GlcNAc-(1-&gt;4)]-alpha-D-Man-(1-&gt;3)-[beta-D-GlcNAc-(1-&gt;2)-[beta-D-GlcNAc-(1-&gt;6)]-alpha-D-Man-(1-&gt;6)]-beta-D-Man-(1-&gt;4)-beta-D-GlcNAc-(1-&gt;4)-beta-D-GlcNAc}-L-asparaginyl-[protein] + UDP + H(+). It functions in the pathway protein modification; protein glycosylation. Functionally, catalyzes the addition of N-acetylglucosamine (GlcNAc) in beta 1-6 linkage to the alpha-linked mannose of biantennary N-linked oligosaccharides. Catalyzes an important step in the biosynthesis of branched, complex-type N-glycans, such as those found on EGFR, TGFR (TGF-beta receptor) and CDH2. Via its role in the biosynthesis of complex N-glycans, plays an important role in the activation of cellular signaling pathways, reorganization of the actin cytoskeleton, cell-cell adhesion and cell migration. MGAT5-dependent EGFR N-glycosylation enhances the interaction between EGFR and LGALS3 and thereby prevents rapid EGFR endocytosis and prolongs EGFR signaling. Required for efficient interaction between TGFB1 and its receptor. Enhances activation of intracellular signaling pathways by several types of growth factors, including FGF2, PDGF, IGF, TGFB1 and EGF. MGAT5-dependent CDH2 N-glycosylation inhibits CDH2-mediated homotypic cell-cell adhesion and contributes to the regulation of downstream signaling pathways. Promotes cell migration. Contributes to the regulation of the inflammatory response. MGAT5-dependent TCR N-glycosylation enhances the interaction between TCR and LGALS3, limits agonist-induced TCR clustering, and thereby dampens TCR-mediated responses to antigens. Required for normal leukocyte evasation and accumulation at sites of inflammation. Inhibits attachment of monocytes to the vascular endothelium and subsequent monocyte diapedesis. Promotes proliferation of umbilical vein endothelial cells and angiogenesis, at least in part by promoting the release of the growth factor FGF2 from the extracellular matrix. The sequence is that of Alpha-1,6-mannosylglycoprotein 6-beta-N-acetylglucosaminyltransferase A (Mgat5) from Mus musculus (Mouse).